The following is a 138-amino-acid chain: Basic phospholipase A2 homolog Vur-S49 (138 aa).

The signal sequence occupies residues 1-16; sequence MRALWIVAVCLIGVEG. Disulfide bonds link cysteine 42–cysteine 131, cysteine 44–cysteine 60, cysteine 59–cysteine 111, cysteine 65–cysteine 138, cysteine 66–cysteine 104, cysteine 73–cysteine 97, and cysteine 91–cysteine 102. The interval 121-133 is important for membrane-damaging activities in eukaryotes and bacteria; heparin-binding; that stretch reads KKYKVYLRFKCKG.

Belongs to the phospholipase A2 family. Group II subfamily. S49 sub-subfamily. Expressed by the venom gland.

It is found in the secreted. Its function is as follows. Snake venom phospholipase A2 homolog that lacks enzymatic activity. Is able to suppress the acetylcholine (ACh)-evoked current mediated by alpha-7 (CHRNA7)-similar nAChRs in L.stagnalis neurons (IC(50)=2.18 uM). This activity is only partially reversible and seems to be non-competitive. This Vipera renardi (Steppe viper) protein is Basic phospholipase A2 homolog Vur-S49.